Reading from the N-terminus, the 264-residue chain is Type III pantothenate kinase (264 aa).

6-13 (DVRNTSIE) is an ATP binding site. 109–112 (GADR) serves as a coordination point for substrate. Residue Asp-111 is the Proton acceptor of the active site. K(+) is bound at residue Asp-131. Thr-134 provides a ligand contact to ATP. Thr-185 lines the substrate pocket.

This sequence belongs to the type III pantothenate kinase family. Homodimer. NH4(+) is required as a cofactor. Requires K(+) as cofactor.

It is found in the cytoplasm. The enzyme catalyses (R)-pantothenate + ATP = (R)-4'-phosphopantothenate + ADP + H(+). The protein operates within cofactor biosynthesis; coenzyme A biosynthesis; CoA from (R)-pantothenate: step 1/5. Catalyzes the phosphorylation of pantothenate (Pan), the first step in CoA biosynthesis. In Nocardia farcinica (strain IFM 10152), this protein is Type III pantothenate kinase.